The following is a 185-amino-acid chain: Translocon-associated protein subunit gamma (185 aa).

An N-acetylmethionine modification is found at methionine 1. Topologically, residues 1-27 are lumenal; the sequence is MAPKGGSKQQSEEDLLLQDFSRNLSAK. 2 positions are modified to phosphoserine: serine 7 and serine 11. The chain crosses the membrane as a helical span at residues 28-48; that stretch reads SSALFFGNAFIVSAIPIWLYW. Residues 49-54 lie on the Cytoplasmic side of the membrane; that stretch reads RIWHMD. The chain crosses the membrane as a helical span at residues 55-76; it reads LIQSAVLYSVMTLVSTYLVAFA. The Lumenal segment spans residues 77–135; sequence YKNVKFVLKHKVAQKREDAVSKEVTRKLSEADNRKMSRKEKDERILWKKNEVADYEATT. Serine 105 carries the post-translational modification Phosphoserine. The helical transmembrane segment at 136–157 threads the bilayer; the sequence is FSIFYNNTLFLVLVIVASFFIL. Residues 158–163 lie on the Cytoplasmic side of the membrane; that stretch reads KNFNPT. A helical membrane pass occupies residues 164–184; sequence VNYILSISASSGLIALLSTGS.

Belongs to the TRAP-gamma family. Heterotetramer of TRAP-alpha, TRAP-beta, TRAP-delta and TRAP-gamma.

Its subcellular location is the endoplasmic reticulum membrane. Functionally, TRAP proteins are part of a complex whose function is to bind calcium to the ER membrane and thereby regulate the retention of ER resident proteins. The chain is Translocon-associated protein subunit gamma (Ssr3) from Mus musculus (Mouse).